The chain runs to 40 residues: Chitin-binding protein 4 (40 aa).

In terms of processing, N-glycosylated.

Its function is as follows. Chitin-binding protein. Has antifungal activity against C.krusei, C.albicans, C.tropicalis and C.parapsilosis. Has antinociceptive and anti-inflammatory activity in mice. This chain is Chitin-binding protein 4, found in Moringa oleifera (Horseradish tree).